Reading from the N-terminus, the 332-residue chain is Serpentine receptor class alpha-10 (332 aa).

Topologically, residues 1–26 are extracellular; it reads MTSSNISICATEDQMVLQTSLLLRVN. Residues 27 to 47 traverse the membrane as a helical segment; sequence VILMTTVAIFTFVLTYRALFI. Residues 48–64 are Cytoplasmic-facing; the sequence is LKQRPIFHKSTKILLYT. Residues 65–85 form a helical membrane-spanning segment; that stretch reads SLIFVNIHEIIFMVIQCVAFI. Residues 86–109 are Extracellular-facing; that stretch reads RSFTLSDKPCEIMRTTLECRFKNH. The chain crosses the membrane as a helical span at residues 110-132; it reads VLIFGIAGMNFNQFGLTVDRLLA. The Cytoplasmic segment spans residues 133–146; that stretch reads TVIPQTYSHLGSFP. The helical transmembrane segment at 147–167 threads the bilayer; the sequence is GILISILVIGCSIAAPLIIAI. Residues 168–191 lie on the Extracellular side of the membrane; the sequence is GDPYDDIVPNCFFFPQHSAPRANV. Residues 192–212 traverse the membrane as a helical segment; it reads FLIILSALVIASIFLNLIIIF. The Cytoplasmic portion of the chain corresponds to 213-239; it reads ANKKLEKGTRYYVSQRYQKREALISTR. Residues 240–260 traverse the membrane as a helical segment; that stretch reads IIVYIAASQFLGMVLYSTIVL. The Extracellular segment spans residues 261–276; the sequence is TLRLHKSMIPVSMYHN. Residues 277–297 form a helical membrane-spanning segment; the sequence is IVWWAYTVPFAAVALPALLIH. Over 298–332 the chain is Cytoplasmic; sequence RINLVGSNRKRVINRITAKVETQEEHMKSLKELWG.

It belongs to the nematode receptor-like protein sra family.

Its subcellular location is the membrane. In Caenorhabditis briggsae, this protein is Serpentine receptor class alpha-10.